The primary structure comprises 114 residues: T cell receptor beta variable 28 (114 aa).

The first 26 residues, 1-26 (MGIRLLCRVAFCFLAVGLVDVKVTQS), serve as a signal peptide directing secretion. The region spanning 27 to 114 (SRYLVKRTGE…TSMYLCASSL (88 aa)) is the Ig-like domain. An intrachain disulfide couples cysteine 42 to cysteine 110. N-linked (GlcNAc...) asparagine glycosylation occurs at asparagine 103.

In terms of assembly, alpha-beta TR is a heterodimer composed of an alpha and beta chain; disulfide-linked. The alpha-beta TR is associated with the transmembrane signaling CD3 coreceptor proteins to form the TR-CD3 (TcR or TCR). The assembly of alpha-beta TR heterodimers with CD3 occurs in the endoplasmic reticulum where a single alpha-beta TR heterodimer associates with one CD3D-CD3E heterodimer, one CD3G-CD3E heterodimer and one CD247 homodimer forming a stable octameric structure. CD3D-CD3E and CD3G-CD3E heterodimers preferentially associate with TR alpha and TR beta chains, respectively. The association of the CD247 homodimer is the last step of TcR assembly in the endoplasmic reticulum and is required for transport to the cell surface.

It is found in the cell membrane. Functionally, v region of the variable domain of T cell receptor (TR) beta chain that participates in the antigen recognition. Alpha-beta T cell receptors are antigen specific receptors which are essential to the immune response and are present on the cell surface of T lymphocytes. Recognize peptide-major histocompatibility (MH) (pMH) complexes that are displayed by antigen presenting cells (APC), a prerequisite for efficient T cell adaptive immunity against pathogens. Binding of alpha-beta TR to pMH complex initiates TR-CD3 clustering on the cell surface and intracellular activation of LCK that phosphorylates the ITAM motifs of CD3G, CD3D, CD3E and CD247 enabling the recruitment of ZAP70. In turn ZAP70 phosphorylates LAT, which recruits numerous signaling molecules to form the LAT signalosome. The LAT signalosome propagates signal branching to three major signaling pathways, the calcium, the mitogen-activated protein kinase (MAPK) kinase and the nuclear factor NF-kappa-B (NF-kB) pathways, leading to the mobilization of transcription factors that are critical for gene expression and essential for T cell growth and differentiation. The T cell repertoire is generated in the thymus, by V-(D)-J rearrangement. This repertoire is then shaped by intrathymic selection events to generate a peripheral T cell pool of self-MH restricted, non-autoaggressive T cells. Post-thymic interaction of alpha-beta TR with the pMH complexes shapes TR structural and functional avidity. The chain is T cell receptor beta variable 28 from Homo sapiens (Human).